The chain runs to 183 residues: MYLIVGLGNIGEKYQYTRHNVGFLVIDEMAKNLQTSNVNNSNFQSTLLKSGYNLFAKPTTYMNNSGVAVHSIKEYYKIDLENIIVIHDDLDLPFGTVKFKIGGGHGGHNGLKSLDSHIGKDYIRVRIGIGKPQNKDDVANFVLSDFSKEELNKLEDIIKHTINAIEALKTADIDEVKSKFTLK.

Position 14 (Y14) interacts with tRNA. Residue H19 is the Proton acceptor of the active site. Residues Y61, N63, and N109 each coordinate tRNA.

The protein belongs to the PTH family. As to quaternary structure, monomer.

The protein localises to the cytoplasm. It catalyses the reaction an N-acyl-L-alpha-aminoacyl-tRNA + H2O = an N-acyl-L-amino acid + a tRNA + H(+). In terms of biological role, hydrolyzes ribosome-free peptidyl-tRNAs (with 1 or more amino acids incorporated), which drop off the ribosome during protein synthesis, or as a result of ribosome stalling. Its function is as follows. Catalyzes the release of premature peptidyl moieties from peptidyl-tRNA molecules trapped in stalled 50S ribosomal subunits, and thus maintains levels of free tRNAs and 50S ribosomes. The protein is Peptidyl-tRNA hydrolase of Aliarcobacter butzleri (strain RM4018) (Arcobacter butzleri).